Here is a 77-residue protein sequence, read N- to C-terminus: Defensin-like protein (77 aa).

A signal peptide spans 1–30 (MERGMRLFSSLVLVLLLVTATEMGPKVAEA). Intrachain disulfides connect C33–C77, C44–C64, C50–C71, and C54–C73.

Belongs to the DEFL family.

The protein localises to the secreted. The chain is Defensin-like protein from Nelumbo nucifera (Sacred lotus).